Consider the following 413-residue polypeptide: Lamin tail domain-containing protein 1 (413 aa).

Disordered stretches follow at residues 1-25 (MMKE…VQDG) and 102-128 (HKDS…SDVD). Positions 107–128 (LGKQSTSSMVPRRQPQSSSDVD) are enriched in polar residues. Residues 169–287 (EVGQFTSSSL…EAIAWYTPIH (119 aa)) enclose the LTD domain. The segment at 356–413 (LPNKSPWCRNPNTSPHPYSSLIDSHDSDISESSLDTQLKPQPTKPKPDPGTKKKKAKS) is disordered. Residues 385–396 (SESSLDTQLKPQ) are compositionally biased toward low complexity.

This sequence belongs to the intermediate filament family.

The chain is Lamin tail domain-containing protein 1 (Lmntd1) from Mus musculus (Mouse).